Here is a 306-residue protein sequence, read N- to C-terminus: Ornithine carbamoyltransferase (306 aa).

Residues 53 to 56 (STRT), glutamine 80, arginine 104, and 131 to 134 (HPCQ) contribute to the carbamoyl phosphate site. L-ornithine-binding positions include asparagine 162, aspartate 220, and 224-225 (SM). Residues 260 to 261 (CL) and arginine 288 contribute to the carbamoyl phosphate site.

This sequence belongs to the aspartate/ornithine carbamoyltransferase superfamily. OTCase family.

Its subcellular location is the cytoplasm. The catalysed reaction is carbamoyl phosphate + L-ornithine = L-citrulline + phosphate + H(+). It participates in amino-acid biosynthesis; L-arginine biosynthesis; L-arginine from L-ornithine and carbamoyl phosphate: step 1/3. In terms of biological role, reversibly catalyzes the transfer of the carbamoyl group from carbamoyl phosphate (CP) to the N(epsilon) atom of ornithine (ORN) to produce L-citrulline. The protein is Ornithine carbamoyltransferase of Dechloromonas aromatica (strain RCB).